We begin with the raw amino-acid sequence, 113 residues long: Iron-sulfur cluster insertion protein ErpA (113 aa).

Residues C41, C105, and C107 each contribute to the iron-sulfur cluster site.

Belongs to the HesB/IscA family. In terms of assembly, homodimer. The cofactor is iron-sulfur cluster.

Required for insertion of 4Fe-4S clusters for at least IspG. This chain is Iron-sulfur cluster insertion protein ErpA, found in Hydrogenovibrio crunogenus (strain DSM 25203 / XCL-2) (Thiomicrospira crunogena).